Reading from the N-terminus, the 150-residue chain is Nucleoside diphosphate kinase (150 aa).

Residues Lys-9, Phe-57, Arg-85, Thr-91, Arg-102, and Asn-112 each coordinate ATP. His-115 serves as the catalytic Pros-phosphohistidine intermediate.

The protein belongs to the NDK family. In terms of assembly, homotetramer. Mg(2+) serves as cofactor.

It localises to the cytoplasm. The enzyme catalyses a 2'-deoxyribonucleoside 5'-diphosphate + ATP = a 2'-deoxyribonucleoside 5'-triphosphate + ADP. The catalysed reaction is a ribonucleoside 5'-diphosphate + ATP = a ribonucleoside 5'-triphosphate + ADP. Its function is as follows. Major role in the synthesis of nucleoside triphosphates other than ATP. The ATP gamma phosphate is transferred to the NDP beta phosphate via a ping-pong mechanism, using a phosphorylated active-site intermediate. The protein is Nucleoside diphosphate kinase of Symbiobacterium thermophilum (strain DSM 24528 / JCM 14929 / IAM 14863 / T).